We begin with the raw amino-acid sequence, 437 residues long: Vacuolar cation/proton exchanger 2 (437 aa).

A disordered region spans residues 1-29 (MMGAEKAEGMEELELEEGGGSPSPSPMTA). The Cytoplasmic portion of the chain corresponds to 1-65 (MMGAEKAEGM…KWRRALTSVR (65 aa)). A helical membrane pass occupies residues 66–86 (VVILQAKINVLLPFGPLAVML). Residues 87–88 (HY) are Extracellular-facing. A helical transmembrane segment spans residues 89 to 109 (LSANHQGWVFLFSLIGITPLA). At 110-126 (ERLGYATEQLALYTGPT) the chain is on the cytoplasmic side. Residues 127-147 (IGGLLNATFGNATEMIISLYA) traverse the membrane as a helical segment. The cation selection stretch occupies residues 136–171 (GNATEMIISLYALKNGMIRVVQQSLLGSILSNMLLV). Over 148–161 (LKNGMIRVVQQSLL) the chain is Extracellular. The helical transmembrane segment at 162–182 (GSILSNMLLVLGCAFFAGGLV) threads the bilayer. The Cytoplasmic portion of the chain corresponds to 183-194 (HPSRDQVFNKAS). Residues 195 to 215 (AVVNSGLLLMAVLGLMFPAVL) form a helical membrane-spanning segment. The Extracellular portion of the chain corresponds to 216–228 (HFTHSEVQYGKSE). Residues 229–249 (VSLSRFSSCIMLVAYASYLFF) form a helical membrane-spanning segment. The Cytoplasmic portion of the chain corresponds to 250–281 (QLKSQRSLYSPIGEQEEEVTEDEEEEKEITQG). The helical transmembrane segment at 282–302 (EAICWLFVLTIWISILSGYLV) threads the bilayer. Residues 303–310 (DAIQGASE) lie on the Extracellular side of the membrane. Residues 311–331 (SLNMPVAFISVILLPIVGNAA) traverse the membrane as a helical segment. The segment at 328 to 363 (GNAAEHASAIMFAMKDKLDITLGVAIGSSTQISMFV) is cation selection. At 332–352 (EHASAIMFAMKDKLDITLGVA) the chain is on the cytoplasmic side. The chain crosses the membrane as a helical span at residues 353-373 (IGSSTQISMFVIPFCVVIGWI). Residues 374–379 (MGQQMD) are Extracellular-facing. A helical membrane pass occupies residues 380-400 (LNFQLFETATLFITVLVVAFM). Topologically, residues 401–408 (LQEGTSNY) are cytoplasmic. The helical transmembrane segment at 409–429 (FKGLMLILCYLIVAASFFVHV) threads the bilayer. At 430 to 437 (DPDSSNNK) the chain is on the extracellular side.

It belongs to the Ca(2+):cation antiporter (CaCA) (TC 2.A.19) family. Cation/proton exchanger (CAX) subfamily. Expressed in roots and shoots.

It localises to the vacuole membrane. In terms of biological role, vacuolar cation/proton exchanger (CAX). Translocates Ca(2+) and other metal ions into vacuoles using the proton gradient formed by H(+)-ATPase and H(+)-pyrophosphatase. The chain is Vacuolar cation/proton exchanger 2 (CAX2) from Oryza sativa subsp. japonica (Rice).